A 421-amino-acid polypeptide reads, in one-letter code: uncharacterized protein (421 aa).

Residues 14-72 (DLTKGDTITVEVTRPAHGGEGIAHHGGRVIFVRGGFPGDDVDVEITQVKKRFARGFVVQ) form the TRAM domain. S-adenosyl-L-methionine is bound by residues Gln-250, Tyr-286, Glu-308, and Asp-349. Cys-376 serves as the catalytic Nucleophile.

Belongs to the class I-like SAM-binding methyltransferase superfamily. RNA M5U methyltransferase family.

This is an uncharacterized protein from Corynebacterium efficiens (strain DSM 44549 / YS-314 / AJ 12310 / JCM 11189 / NBRC 100395).